The primary structure comprises 400 residues: uncharacterized protein (400 aa).

This sequence to M.jannaschii MJ1544 and MJ1637.

This is an uncharacterized protein from Haemophilus influenzae (strain ATCC 51907 / DSM 11121 / KW20 / Rd).